A 1772-amino-acid chain; its full sequence is Merozoite surface protein 1 (1772 aa).

An N-terminal signal peptide occupies residues 1-18 (MKVIGLLFSFVFFAIKCK). N-linked (GlcNAc...) asparagine glycosylation occurs at N54. A disordered region spans residues 290 to 319 (TGGQSSTEPGSGGSSASGTSSSGQASAGTG). The span at 305–319 (ASGTSSSGQASAGTG) shows a compositional bias: low complexity. 2 N-linked (GlcNAc...) asparagine glycosylation sites follow: N406 and N646. Residues 703 to 796 (KERMEQGPAI…QPSQAASSTT (94 aa)) are disordered. Low complexity predominate over residues 724-796 (SAESSTDRST…QPSQAASSTT (73 aa)). Residue N829 is glycosylated (N-linked (GlcNAc...) asparagine). The disordered stretch occupies residues 924-1070 (AAPTPVTPAA…SRAESEEDMP (147 aa)). Composition is skewed to low complexity over residues 930–946 (TPAA…PDVQ) and 956–1052 (SQQP…NSQS). 2 N-linked (GlcNAc...) asparagine glycosylation sites follow: N1018 and N1090. Residues 1362–1383 (GAVPGSGTDTRVAGSSVDDNED) form a disordered region. N-linked (GlcNAc...) asparagine glycosylation is found at N1408, N1446, N1541, and N1629. 2 consecutive EGF-like domains span residues 1661–1703 (HVCV…VENN) and 1704–1752 (NPTC…FCSS). Residues C1663 and C1675 are joined by a disulfide bond. Residue N1680 is glycosylated (N-linked (GlcNAc...) asparagine). Intrachain disulfides connect C1687–C1699, C1707–C1720, C1714–C1734, and C1736–C1750. S1751 is lipidated: GPI-anchor amidated serine. Residues 1752–1772 (SSSFMGLSILLIITLIVFNIF) constitute a propeptide, removed in mature form.

Forms a complex composed of subunits p83, p30, p38, and p42 which remain non-covalently associated; the complex is formed at the merozoite surface prior to egress from host erythrocytes. The p230 precursor is cleaved by SUB1 prior to merozoite egress into 4 subunits p83, p30, p38, and p42 which remain non-covalently associated. In a second processing step during erythrocyte invasion, p42 is cleaved by SUB2 into p33 and p19; the latter remains attached to the merozoite surface via its GPI-anchor and stays on the surface during the subsequent ring stage.

The protein localises to the cell membrane. Its subcellular location is the secreted. During the asexual blood stage, involved in merozoite egress from host erythrocytes possibly via its interaction with the host cytoskeleton protein spectrin resulting in the destabilization of the host cytoskeleton and thus leading to erythrocyte cell membrane rupture. Involved in the binding to host erythrocytes and is required for host erythrocyte invasion. The sequence is that of Merozoite surface protein 1 from Plasmodium yoelii yoelii.